The primary structure comprises 920 residues: Zinc finger MIZ domain-containing protein 2 (920 aa).

2 disordered regions span residues 1–22 (MNSM…GSFA) and 54–79 (SQVL…VAGG). Residues 60-79 (PMGPAGSPSGSSMMPGVAGG) show a composition bias toward low complexity. The residue at position 111 (arginine 111) is an Omega-N-methylarginine. Disordered stretches follow at residues 243-265 (GQRL…RQGV) and 286-391 (PSTA…SPNQ). An asymmetric dimethylarginine mark is found at arginine 245 and arginine 262. Residues 295–304 (PGQPPAPSPS) show a composition bias toward pro residues. Residues 334–354 (EQFNGQGASFNGGSVSYSQPG) are compositionally biased toward polar residues. Residues 366-379 (PSSPLPGNPTPPMT) show a composition bias toward pro residues. The segment covering 380–389 (PSSSVPYMSP) has biased composition (low complexity). Glycyl lysine isopeptide (Lys-Gly) (interchain with G-Cter in SUMO2) cross-links involve residues lysine 402 and lysine 457. The segment at 435-506 (PFRLQHNLAV…TIERGDNKTS (72 aa)) is interaction with AR. The SP-RING-type zinc finger occupies 585–671 (GEDGVEQTAI…IYIQNSDYEE (87 aa)). 4 residues coordinate Zn(2+): cysteine 616, histidine 618, cysteine 639, and cysteine 642. Lysine 692 is covalently cross-linked (Glycyl lysine isopeptide (Lys-Gly) (interchain with G-Cter in SUMO2)). The interval 803-920 (SQMAPAGHLD…DDLLSLFENN (118 aa)) is disordered. The span at 876–890 (AGEAPEPALDLLPEL) shows a compositional bias: low complexity. Polar residues predominate over residues 906 to 920 (PTNNNDDLLSLFENN).

Interacts with AR, SMARCA4/BRG1 and SMARCE1/BAF57. Interaction with either SMARCA4 and SMARCE1 enhances AR-mediated transcription. Expressed most abundantly in testis with lower levels in heart, brain, pancreas, prostate and ovary.

It is found in the nucleus. Increases ligand-dependent transcriptional activity of AR and other nuclear hormone receptors. The protein is Zinc finger MIZ domain-containing protein 2 (ZMIZ2) of Homo sapiens (Human).